A 529-amino-acid polypeptide reads, in one-letter code: Delayed-rectifier potassium channel regulatory subunit KCNS1 (529 aa).

Residues 1 to 217 (MLMLLVRGTH…LTMENPGYSL (217 aa)) are Cytoplasmic-facing. The chain crosses the membrane as a helical span at residues 218–239 (PSKLFSCVSIGVVLASIAAMCI). The Extracellular portion of the chain corresponds to 240 to 270 (HSLPEYQAREAAAAVATVAAGRSAEDVRDDP). A helical membrane pass occupies residues 271–293 (VLRRLEYFCIAWFSFEVSSRLLL). Residues 294–304 (APSTRNFFCHP) lie on the Cytoplasmic side of the membrane. The chain crosses the membrane as a helical span at residues 305-322 (LNLIDIVSVLPFYLTLLA). At 323 to 342 (SVALGGNNHGGTSGEELGHL) the chain is on the extracellular side. The helical; Voltage-sensor transmembrane segment at 343 to 363 (GKVVQVFRLMRIFRVLKLARH) threads the bilayer. Residues 364-378 (STGLRSLGATLKHSY) lie on the Cytoplasmic side of the membrane. The chain crosses the membrane as a helical span at residues 379-400 (REVGILLLYLAVGVSVFSGVAY). Topologically, residues 401 to 413 (TAEKEEDVGFDTI) are extracellular. The segment at residues 414–425 (PACWWWGTVSMT) is an intramembrane region (helical). Residues 426–431 (TVGYGD) carry the Selectivity filter motif. The stretch at 426–433 (TVGYGDVV) is an intramembrane region. The Extracellular segment spans residues 434–440 (PVTLAGK). A helical membrane pass occupies residues 441–469 (LAASGCILGGILVVALPITIIFNKFSHFY). At 470 to 529 (QRQKALEAAVRNSGHREFEDLLSSVDGVSDASLETSRETSQEGRSADLEAPSESPKPQIY) the chain is on the cytoplasmic side. The segment at 498-529 (SDASLETSRETSQEGRSADLEAPSESPKPQIY) is disordered. The segment covering 504-516 (TSRETSQEGRSAD) has biased composition (basic and acidic residues).

The protein belongs to the potassium channel family. S (TC 1.A.1.2) subfamily. Kv9.1/KCNS1 sub-subfamily. As to quaternary structure, heterotetramer with KCNB1. Heterotetramer with KCNB2. Does not form homomultimers.

It localises to the cell membrane. In terms of biological role, potassium channel regulatory subunit that modulate the delayed rectifier voltage-gated potassium channel activity of KCNB1 and KCNB2 by altering their kinetics, expression levels, and shifting the half-inactivation potential to more polarized values. While it does not form functional channels on its own, it can form functional heterotetrameric channels with KCNB1 and KCNB2. Each regulatory subunit has unique regulatory properties that can lead to extensive inhibition, significant changes in kinetics, and/or substantial shifts in the voltage dependencies of the inactivation process. The polypeptide is Delayed-rectifier potassium channel regulatory subunit KCNS1 (Lemur catta (Ring-tailed lemur)).